A 491-amino-acid chain; its full sequence is Transmembrane protein 200A (491 aa).

Topologically, residues 1-61 (MIATGGVITG…RGKIRLYSPS (61 aa)) are cytoplasmic. Residues 16-41 (RQDSARSQQHVNLSPSPATQEKKPIR) form a disordered region. Polar residues predominate over residues 20–34 (ARSQQHVNLSPSPAT). A helical membrane pass occupies residues 62 to 82 (GFFLILGVLISIIGIAMAVLG). Topologically, residues 83 to 126 (YWPQKEHFIDAETTLSTNETQVIRNEGGVVVRFFEQHLHSDKMK) are extracellular. Residue Asn-100 is glycosylated (N-linked (GlcNAc...) asparagine). A helical transmembrane segment spans residues 127–147 (MLGPFTMGIGIFIFICANAIL). The Cytoplasmic segment spans residues 148-491 (HENRDKETKI…LKRGTSETRF (344 aa)). The residue at position 350 (Ser-350) is a Phosphoserine.

It belongs to the TMEM200 family. Expressed in cerebellum.

It localises to the membrane. The chain is Transmembrane protein 200A (TMEM200A) from Homo sapiens (Human).